The sequence spans 314 residues: Methionyl-tRNA formyltransferase (314 aa).

Residue 112-115 (SLLP) participates in (6S)-5,6,7,8-tetrahydrofolate binding.

Belongs to the Fmt family.

The enzyme catalyses L-methionyl-tRNA(fMet) + (6R)-10-formyltetrahydrofolate = N-formyl-L-methionyl-tRNA(fMet) + (6S)-5,6,7,8-tetrahydrofolate + H(+). Its function is as follows. Attaches a formyl group to the free amino group of methionyl-tRNA(fMet). The formyl group appears to play a dual role in the initiator identity of N-formylmethionyl-tRNA by promoting its recognition by IF2 and preventing the misappropriation of this tRNA by the elongation apparatus. This is Methionyl-tRNA formyltransferase from Buchnera aphidicola subsp. Schizaphis graminum (strain Sg).